Here is a 510-residue protein sequence, read N- to C-terminus: 2,3-bisphosphoglycerate-independent phosphoglycerate mutase (510 aa).

Residues Asp-12 and Ser-62 each coordinate Mn(2+). Residue Ser-62 is the Phosphoserine intermediate of the active site. Substrate-binding positions include His-123, 153–154, Arg-185, Arg-191, 260–263, and Lys-335; these read RD and RPDR. Positions 402, 406, 443, 444, and 461 each coordinate Mn(2+).

It belongs to the BPG-independent phosphoglycerate mutase family. Monomer. The cofactor is Mn(2+).

The enzyme catalyses (2R)-2-phosphoglycerate = (2R)-3-phosphoglycerate. The protein operates within carbohydrate degradation; glycolysis; pyruvate from D-glyceraldehyde 3-phosphate: step 3/5. In terms of biological role, catalyzes the interconversion of 2-phosphoglycerate and 3-phosphoglycerate. The polypeptide is 2,3-bisphosphoglycerate-independent phosphoglycerate mutase (Listeria monocytogenes serovar 1/2a (strain ATCC BAA-679 / EGD-e)).